A 505-amino-acid chain; its full sequence is Glycerol kinase (505 aa).

Thr14 contributes to the ADP binding site. 3 residues coordinate ATP: Thr14, Thr15, and Ser16. Sn-glycerol 3-phosphate is bound at residue Thr14. Arg18 serves as a coordination point for ADP. 4 residues coordinate sn-glycerol 3-phosphate: Arg84, Glu85, Tyr136, and Asp246. Residues Arg84, Glu85, Tyr136, Asp246, and Gln247 each coordinate glycerol. 2 residues coordinate ADP: Thr268 and Gly311. ATP contacts are provided by Thr268, Gly311, Gln315, and Gly412. ADP is bound by residues Gly412 and Asn416.

Belongs to the FGGY kinase family.

The enzyme catalyses glycerol + ATP = sn-glycerol 3-phosphate + ADP + H(+). Its pathway is polyol metabolism; glycerol degradation via glycerol kinase pathway; sn-glycerol 3-phosphate from glycerol: step 1/1. Inhibited by fructose 1,6-bisphosphate (FBP). Its function is as follows. Key enzyme in the regulation of glycerol uptake and metabolism. Catalyzes the phosphorylation of glycerol to yield sn-glycerol 3-phosphate. This is Glycerol kinase from Vibrio cholerae serotype O1 (strain ATCC 39315 / El Tor Inaba N16961).